Here is a 301-residue protein sequence, read N- to C-terminus: Tyrosine recombinase XerC (301 aa).

Residues 2–84 (TNTQFYITNF…TLRSFFSYLY (83 aa)) enclose the Core-binding (CB) domain. In terms of domain architecture, Tyr recombinase spans 105–291 (ALPKFLTVDD…DLKHLIEVYD (187 aa)). Residues Arg145, Lys169, His243, Arg246, and His269 contribute to the active site. Catalysis depends on Tyr278, which acts as the O-(3'-phospho-DNA)-tyrosine intermediate.

It belongs to the 'phage' integrase family. XerC subfamily. As to quaternary structure, forms a cyclic heterotetrameric complex composed of two molecules of XerC and two molecules of XerD.

It is found in the cytoplasm. In terms of biological role, site-specific tyrosine recombinase, which acts by catalyzing the cutting and rejoining of the recombining DNA molecules. The XerC-XerD complex is essential to convert dimers of the bacterial chromosome into monomers to permit their segregation at cell division. It also contributes to the segregational stability of plasmids. The chain is Tyrosine recombinase XerC from Thermodesulfovibrio yellowstonii (strain ATCC 51303 / DSM 11347 / YP87).